The following is a 144-amino-acid chain: uncharacterized protein (144 aa).

Residues 72–90 (VAIGTSLIVGAGVAMEVSV) traverse the membrane as a helical segment.

To yeast YCL21w.

The protein resides in the membrane. This is an uncharacterized protein from Saccharomyces cerevisiae (strain ATCC 204508 / S288c) (Baker's yeast).